A 340-amino-acid chain; its full sequence is Arginase 1, mitochondrial (340 aa).

Residues 1–24 (MGGVAAGTRWIHHVRRLSAAKVSA) constitute a mitochondrion transit peptide. Histidine 159, aspartate 183, histidine 185, and aspartate 187 together coordinate Mn(2+). Substrate contacts are provided by residues 185–189 (HPDIY) and 193–195 (EGN). 2 residues coordinate Mn(2+): aspartate 268 and aspartate 270. Glutamate 311 lines the substrate pocket.

Belongs to the arginase family. Mn(2+) is required as a cofactor.

The protein localises to the mitochondrion. It carries out the reaction L-arginine + H2O = urea + L-ornithine. It functions in the pathway nitrogen metabolism; urea cycle; L-ornithine and urea from L-arginine: step 1/1. Functionally, catalyzes the hydrolysis of L-arginine to urea and L-ornithine. The latter can be utilized in the urea cycle or as a precursor for the synthesis of both polyamines and proline. This is Arginase 1, mitochondrial (ARG1) from Oryza sativa subsp. japonica (Rice).